The chain runs to 318 residues: Pantothenate kinase (318 aa).

96 to 103 (GSVAVGKS) is an ATP binding site.

The protein belongs to the prokaryotic pantothenate kinase family.

Its subcellular location is the cytoplasm. The enzyme catalyses (R)-pantothenate + ATP = (R)-4'-phosphopantothenate + ADP + H(+). The protein operates within cofactor biosynthesis; coenzyme A biosynthesis; CoA from (R)-pantothenate: step 1/5. The polypeptide is Pantothenate kinase (Bradyrhizobium diazoefficiens (strain JCM 10833 / BCRC 13528 / IAM 13628 / NBRC 14792 / USDA 110)).